Consider the following 231-residue polypeptide: Small ribosomal subunit protein uS3 (231 aa).

The region spanning 39–107 (IRKFIKEKLF…QVSVNIVEIK (69 aa)) is the KH type-2 domain.

Belongs to the universal ribosomal protein uS3 family. As to quaternary structure, part of the 30S ribosomal subunit. Forms a tight complex with proteins S10 and S14.

Functionally, binds the lower part of the 30S subunit head. Binds mRNA in the 70S ribosome, positioning it for translation. The polypeptide is Small ribosomal subunit protein uS3 (Pelotomaculum thermopropionicum (strain DSM 13744 / JCM 10971 / SI)).